The following is a 122-amino-acid chain: MIQQETRLKVADNSGAREVLTIKVLGGSGRKTANIGDVIVCTVKNATPGGVVKKGDVVKAVVVRTKSGVRRNDGSYIKFDENACVIIRDDKGPRGTRIFGPVARELREGNFMKIVSLAPEVL.

The protein belongs to the universal ribosomal protein uL14 family. Part of the 50S ribosomal subunit. Forms a cluster with proteins L3 and L19. In the 70S ribosome, L14 and L19 interact and together make contacts with the 16S rRNA in bridges B5 and B8.

In terms of biological role, binds to 23S rRNA. Forms part of two intersubunit bridges in the 70S ribosome. The sequence is that of Large ribosomal subunit protein uL14 from Staphylococcus haemolyticus (strain JCSC1435).